The primary structure comprises 146 residues: Large ribosomal subunit protein uL15 (146 aa).

Positions 1 to 10 (MTLKLHDLRP) are enriched in basic and acidic residues. The tract at residues 1–41 (MTLKLHDLRPARGSKTARTRVGRGDGSKGKTAGRGTKGTRA) is disordered.

It belongs to the universal ribosomal protein uL15 family. As to quaternary structure, part of the 50S ribosomal subunit.

Binds to the 23S rRNA. In Mycobacterium bovis (strain BCG / Pasteur 1173P2), this protein is Large ribosomal subunit protein uL15.